Here is a 100-residue protein sequence, read N- to C-terminus: Urease subunit gamma (100 aa).

This sequence belongs to the urease gamma subunit family. In terms of assembly, heterotrimer of UreA (gamma), UreB (beta) and UreC (alpha) subunits. Three heterotrimers associate to form the active enzyme.

The protein localises to the cytoplasm. The enzyme catalyses urea + 2 H2O + H(+) = hydrogencarbonate + 2 NH4(+). It participates in nitrogen metabolism; urea degradation; CO(2) and NH(3) from urea (urease route): step 1/1. This is Urease subunit gamma from Ralstonia nicotianae (strain ATCC BAA-1114 / GMI1000) (Ralstonia solanacearum).